The following is a 205-amino-acid chain: Protein phosphatase inhibitor 2 family member C (205 aa).

Disordered stretches follow at residues 1–51 and 70–114; these read MSAS…DESS and EPGT…DHSC. The segment at 12 to 17 is required for binding PPP1CC; that stretch reads KGILKN. Over residues 19–34 the composition is skewed to low complexity; the sequence is SSSGSSVATSGQQSGG. The segment at 43-55 is required for binding PPP1CC; it reads KSQKWDESSILAT. Residues 84–102 are compositionally biased toward basic and acidic residues; that stretch reads DSVRDVEGEDSVRGVEGKE. The interval 147-150 is required for binding PPP1CC catalytic center, displacing metal ions and inhibition of PPP1CC catalytic activity; that stretch reads HYNE. The tract at residues 165 to 205 is disordered; it reads LQSEDDENEERPQATNEEKTAAEESEEAPLSGGLQTQSCDP. A compositionally biased stretch (basic and acidic residues) spans 174-186; that stretch reads ERPQATNEEKTAA.

It belongs to the protein phosphatase inhibitor 2 family.

Its function is as follows. Functions as a protein phosphatase inhibitor. It inhibits activity of the catalytic subunit of PP1 and weakly inhibits the activity of myosin-associated phosphates. In Macaca fascicularis (Crab-eating macaque), this protein is Protein phosphatase inhibitor 2 family member C (PPP1R2C).